Here is a 585-residue protein sequence, read N- to C-terminus: Cysteine/serine-rich nuclear protein 3 (585 aa).

Disordered regions lie at residues 1-52 (MSGI…TPSS) and 335-395 (ELDC…GFVE). A compositionally biased stretch (low complexity) spans 30–40 (SSESADSGDSV). Positions 41-52 (NPSTSSHFTPSS) are enriched in polar residues. Over residues 335 to 349 (ELDCQGEEEEEEEDG) the composition is skewed to acidic residues. Over residues 351 to 366 (SFCSGVTDSSTQSLAP) the composition is skewed to polar residues. Residues 368 to 389 (ESDEEEEEEEEEEEEEDDDDDK) show a composition bias toward acidic residues.

It belongs to the AXUD1 family.

Its subcellular location is the nucleus. Its function is as follows. Binds to the consensus sequence 5'-AGAGTG-3' and has transcriptional activator activity. Plays a role in apoptosis. This Homo sapiens (Human) protein is Cysteine/serine-rich nuclear protein 3 (CSRNP3).